Reading from the N-terminus, the 338-residue chain is tRNA N6-adenosine threonylcarbamoyltransferase (338 aa).

Residues H111 and H115 each contribute to the Fe cation site. Substrate is bound by residues 134 to 138, D167, G180, and N272; that span reads LVSGG. D300 provides a ligand contact to Fe cation.

Belongs to the KAE1 / TsaD family. Fe(2+) serves as cofactor.

It is found in the cytoplasm. The catalysed reaction is L-threonylcarbamoyladenylate + adenosine(37) in tRNA = N(6)-L-threonylcarbamoyladenosine(37) in tRNA + AMP + H(+). Functionally, required for the formation of a threonylcarbamoyl group on adenosine at position 37 (t(6)A37) in tRNAs that read codons beginning with adenine. Is involved in the transfer of the threonylcarbamoyl moiety of threonylcarbamoyl-AMP (TC-AMP) to the N6 group of A37, together with TsaE and TsaB. TsaD likely plays a direct catalytic role in this reaction. The chain is tRNA N6-adenosine threonylcarbamoyltransferase from Shewanella oneidensis (strain ATCC 700550 / JCM 31522 / CIP 106686 / LMG 19005 / NCIMB 14063 / MR-1).